Consider the following 1106-residue polypeptide: Carbamoyl phosphate synthase large chain (1106 aa).

The segment at 1–401 (MPKRNDLNKV…AFLKALRSLE (401 aa)) is carboxyphosphate synthetic domain. ATP-binding residues include R129, R169, G175, G176, R208, V210, E215, G241, V242, H243, Q284, and E298. The region spanning 133–327 (KTTMNDIGEP…IARVASKIAI (195 aa)) is the ATP-grasp 1 domain. Positions 284, 298, and 300 each coordinate Mg(2+). 3 residues coordinate Mn(2+): Q284, E298, and N300. Residues 402-577 (IDLDDLHQSI…YSAYNEENEA (176 aa)) are oligomerization domain. Positions 578-964 (IPPSEPTHDK…ALYKAMLASG (387 aa)) are carbamoyl phosphate synthetic domain. Positions 706 to 896 (DQLLNKLGID…MVKIATKAMM (191 aa)) constitute an ATP-grasp 2 domain. ATP-binding residues include R742, Q781, L783, E787, G812, V813, H814, S815, Q855, and E867. Mg(2+) contacts are provided by Q855, E867, and N869. Mn(2+) is bound by residues Q855, E867, and N869. Positions 965–1106 (FSINLNGGVL…LQDYLKELSN (142 aa)) constitute an MGS-like domain. Residues 965 to 1106 (FSINLNGGVL…LQDYLKELSN (142 aa)) form an allosteric domain region.

It belongs to the CarB family. As to quaternary structure, composed of two chains; the small (or glutamine) chain promotes the hydrolysis of glutamine to ammonia, which is used by the large (or ammonia) chain to synthesize carbamoyl phosphate. Tetramer of heterodimers (alpha,beta)4. The cofactor is Mg(2+). Mn(2+) is required as a cofactor.

The catalysed reaction is hydrogencarbonate + L-glutamine + 2 ATP + H2O = carbamoyl phosphate + L-glutamate + 2 ADP + phosphate + 2 H(+). It catalyses the reaction hydrogencarbonate + NH4(+) + 2 ATP = carbamoyl phosphate + 2 ADP + phosphate + 2 H(+). The protein operates within amino-acid biosynthesis; L-arginine biosynthesis; carbamoyl phosphate from bicarbonate: step 1/1. It functions in the pathway pyrimidine metabolism; UMP biosynthesis via de novo pathway; (S)-dihydroorotate from bicarbonate: step 1/3. Functionally, large subunit of the glutamine-dependent carbamoyl phosphate synthetase (CPSase). CPSase catalyzes the formation of carbamoyl phosphate from the ammonia moiety of glutamine, carbonate, and phosphate donated by ATP, constituting the first step of 2 biosynthetic pathways, one leading to arginine and/or urea and the other to pyrimidine nucleotides. The large subunit (synthetase) binds the substrates ammonia (free or transferred from glutamine from the small subunit), hydrogencarbonate and ATP and carries out an ATP-coupled ligase reaction, activating hydrogencarbonate by forming carboxy phosphate which reacts with ammonia to form carbamoyl phosphate. This is Carbamoyl phosphate synthase large chain from Natranaerobius thermophilus (strain ATCC BAA-1301 / DSM 18059 / JW/NM-WN-LF).